A 587-amino-acid polypeptide reads, in one-letter code: Folylpolyglutamate synthase, mitochondrial (587 aa).

The transit peptide at 1–42 (MSWARSRLCSTLSLAAVSARGATTEGAARRGMSAWPAPQEPG) directs the protein to the mitochondrion. ATP is bound at residue 106–109 (GKGS). 3 residues coordinate Mg(2+): serine 130, glutamate 200, and histidine 228. Arginine 363 and aspartate 377 together coordinate ATP. The residue at position 539 (serine 539) is a Phosphoserine.

The protein belongs to the folylpolyglutamate synthase family. As to quaternary structure, monomer. Requires a monovalent cation as cofactor. In terms of tissue distribution, with non-specific probe, highest content in kidney and liver and lowest in spleen, lung and small intestine, and readily detectable in all of the tumors except hepatoma. Isoform 1 and isoform 2 expressed in leukemic cells and isoform 4 and isoform 5 in liver cells. Isoform 1 and isoform 2 exclusively expressed in hepatoma and Lewis lung carcinoma. Isoform 1 and isoform 2 also expressed in bone marrow, small intestine and spleen. Kidney expresses isoform 1, isoform 2, isoform 4 and isoform 5.

It localises to the mitochondrion inner membrane. It is found in the mitochondrion matrix. The protein resides in the cytoplasm. It carries out the reaction (6S)-5,6,7,8-tetrahydrofolyl-(gamma-L-Glu)(n) + L-glutamate + ATP = (6S)-5,6,7,8-tetrahydrofolyl-(gamma-L-Glu)(n+1) + ADP + phosphate + H(+). It functions in the pathway cofactor biosynthesis; tetrahydrofolylpolyglutamate biosynthesis. Inhibited by ammonium sulfate. Inhibited by pentaglutamate derivative of DDATHF, but isoform 2 is inhibited to a greater extent at lower concentrations of the compound that is isoform 5. Isoform 5 is virtually unaffected by H(4)PteGlu(5) and 5,10-CH(2)-H(4)PteGlu(5) at concentrations that substantially inhibits the activity of isoform 2. Isoform 2 and 5 are equally sensitive to polyglutamates of 10-CHO-H(4)-PteGlu. In terms of biological role, catalyzes conversion of folates to polyglutamate derivatives allowing concentration of folate compounds in the cell and the intracellular retention of these cofactors, which are important substrates for most of the folate-dependent enzymes that are involved in one-carbon transfer reactions involved in purine, pyrimidine and amino acid synthesis. Dihydrofolate, tetrahydrofolate, 5,10-methylenetetrahydrofolate, 10-formyltetrahydrofolate and 5-formyltetrahydrofolate are the best substrates. Folic acid and 5-methyltetrahydrofolate can also act as substrates. This Mus musculus (Mouse) protein is Folylpolyglutamate synthase, mitochondrial (Fpgs).